Consider the following 218-residue polypeptide: Eukaryotic translation initiation factor 4E-1 (218 aa).

A disordered region spans residues 1–39; the sequence is MAEETDTRPASAGSRGRPAPEDDDREEGEITDLACAPSP. Positions 21-30 are enriched in acidic residues; it reads EDDDREEGEI. EIF4G-binding regions lie at residues 43–46 and 53–89; these read HPLE and FDNPQSKSKQAAWGSSIRPIHTFSTVEEFWGLYNNIN. MRNA contacts are provided by residues 61–66, lysine 93, and 111–112; these read KQAAWG and WE. Cysteine 116 and cysteine 154 are disulfide-bonded. An EIF4G-binding region spans residues 137-146; it reads HTLLAMIGEQ. MRNA is bound by residues 161–166 and 206–210; these read RGKQER and KKMDK.

It belongs to the eukaryotic initiation factor 4E family. EIF4F is a multi-subunit complex, the composition of which varies with external and internal environmental conditions. It is composed of at least EIF4A, EIF4E and EIF4G. EIF4E is also known to interact with other partners. In higher plants two isoforms of EIF4F have been identified, named isoform EIF4F and isoform EIF(iso)4F. Isoform EIF4F has subunits p220 and p26, whereas isoform EIF(iso)4F has subunits p82 and p28. According to the redox status, the Cys-116-Cys-154 disulfide bridge may have a role in regulating protein function by affecting its ability to bind capped mRNA. In terms of processing, phosphorylated upon oxygen deprivation.

Its subcellular location is the nucleus. It localises to the cytoplasm. In terms of biological role, component of the protein complex eIF4F, which is involved in the recognition of the mRNA cap, ATP-dependent unwinding of 5'-terminal secondary structure and recruitment of mRNA to the ribosome. Recognizes and binds the 7-methylguanosine-containing mRNA cap during an early step in the initiation of protein synthesis and facilitates ribosome binding by inducing the unwinding of the mRNAs secondary structures. This is Eukaryotic translation initiation factor 4E-1 from Zea mays (Maize).